Reading from the N-terminus, the 155-residue chain is IFN signaling evasion protein OPG029 (155 aa).

Belongs to the orthopoxvirus OPG029 family. In terms of assembly, interacts with host TANK, TBKBP1 and AZI2; these interactions prevent interferon production. Interacts with host STAT2.

Its function is as follows. Prevents establishment of cellular antiviral state by blocking virus-induced phosphorylation and activation of interferon regulatory factors 3/IRF3 and 7/IRF7, transcription factors critical for the induction of interferons alpha and beta. This blockage is produced through the inhibition of host TBK1, by binding host TBK1 adapter proteins TBKBP1 and AZI2, thereby producing a strong inhibition of the phosphorylation and activation of IRF3 and IRF7. Also acts as an inhibitor of the cellular response to type I IFN by interacting with host STAT2. Mechanistically, exerts its inhibitory effect after host ISGF3 complex (composed of STAT1, STAT2 and IRF9) binding to the interferon stimulated response element (ISRE). The polypeptide is IFN signaling evasion protein OPG029 (OPG019) (Cynomys gunnisoni (Gunnison's prairie dog)).